The chain runs to 308 residues: Methionyl-tRNA formyltransferase (308 aa).

109–112 (SLLP) is a (6S)-5,6,7,8-tetrahydrofolate binding site.

This sequence belongs to the Fmt family.

The catalysed reaction is L-methionyl-tRNA(fMet) + (6R)-10-formyltetrahydrofolate = N-formyl-L-methionyl-tRNA(fMet) + (6S)-5,6,7,8-tetrahydrofolate + H(+). Attaches a formyl group to the free amino group of methionyl-tRNA(fMet). The formyl group appears to play a dual role in the initiator identity of N-formylmethionyl-tRNA by promoting its recognition by IF2 and preventing the misappropriation of this tRNA by the elongation apparatus. This is Methionyl-tRNA formyltransferase from Clostridium beijerinckii (strain ATCC 51743 / NCIMB 8052) (Clostridium acetobutylicum).